A 245-amino-acid polypeptide reads, in one-letter code: MAAKPKPLDAEIEALELDARYGHLAAEAIVELAVNRFRDEGGIATVSSFGADSAVLLHMVASVDKSLPVLFLDTGQHFGETIEYRDQLASDLGLSNLVVVHPKSEMLSARDPGNDLHKSDSDLCCEIRKVEPMARAVEPYSAWFTGRKRHQAESRAQMPVFEAVGPRIRINPLARWTTADQAAYMRANDLRENPLVAYGYLSIGCFPCTQPVKPGEDQRSGRWAGLAKTECGIHLPGLEALTNAA.

[4Fe-4S] cluster is bound by residues Cys124, Cys125, Cys205, and Cys208. Cys231 (nucleophile; cysteine thiosulfonate intermediate) is an active-site residue.

Belongs to the PAPS reductase family. CysH subfamily. The cofactor is [4Fe-4S] cluster.

The protein localises to the cytoplasm. It catalyses the reaction [thioredoxin]-disulfide + sulfite + AMP + 2 H(+) = adenosine 5'-phosphosulfate + [thioredoxin]-dithiol. The protein operates within sulfur metabolism; hydrogen sulfide biosynthesis; sulfite from sulfate. Catalyzes the formation of sulfite from adenosine 5'-phosphosulfate (APS) using thioredoxin as an electron donor. This Chelativorans sp. (strain BNC1) protein is Adenosine 5'-phosphosulfate reductase.